Reading from the N-terminus, the 65-residue chain is Large ribosomal subunit protein bL33m (65 aa).

The N-terminal 8 residues, 1 to 8 (MLLSAVSF), are a transit peptide targeting the mitochondrion.

This sequence belongs to the bacterial ribosomal protein bL33 family. In terms of assembly, component of the mitochondrial ribosome large subunit (39S) which comprises a 16S rRNA and about 50 distinct proteins.

It localises to the mitochondrion. In Mus musculus (Mouse), this protein is Large ribosomal subunit protein bL33m (Mrpl33).